Consider the following 540-residue polypeptide: RNA exonuclease 3 (540 aa).

The C3H1-type zinc-finger motif lies at 7 to 34 (QFKHIVCPFLRTGRKCQSRNCFFSHDFQ). The region spanning 382–529 (HCALDCELCY…EDAVSALQLV (148 aa)) is the Exonuclease domain.

Belongs to the REXO1/REXO3 family.

The protein localises to the cytoplasm. Its subcellular location is the nucleus. 3' to 5' exoribonuclease required for proper 3' end maturation of MRP RNA and of the U5L snRNA. The chain is RNA exonuclease 3 (rex3) from Schizosaccharomyces pombe (strain 972 / ATCC 24843) (Fission yeast).